The chain runs to 240 residues: tRNA (guanine-N(1)-)-methyltransferase (240 aa).

S-adenosyl-L-methionine contacts are provided by residues glycine 112 and 132–137 (LGDFVL).

The protein belongs to the RNA methyltransferase TrmD family. As to quaternary structure, homodimer.

It is found in the cytoplasm. It carries out the reaction guanosine(37) in tRNA + S-adenosyl-L-methionine = N(1)-methylguanosine(37) in tRNA + S-adenosyl-L-homocysteine + H(+). Its function is as follows. Specifically methylates guanosine-37 in various tRNAs. This is tRNA (guanine-N(1)-)-methyltransferase from Cyanothece sp. (strain PCC 7425 / ATCC 29141).